The following is a 106-amino-acid chain: Nucleoid-associated protein XOO1065 (106 aa).

Residues Lys-80–Met-89 are compositionally biased toward basic and acidic residues. Residues Lys-80–Phe-106 form a disordered region.

Belongs to the YbaB/EbfC family. Homodimer.

The protein localises to the cytoplasm. Its subcellular location is the nucleoid. Binds to DNA and alters its conformation. May be involved in regulation of gene expression, nucleoid organization and DNA protection. This is Nucleoid-associated protein XOO1065 from Xanthomonas oryzae pv. oryzae (strain KACC10331 / KXO85).